Here is a 341-residue protein sequence, read N- to C-terminus: MHSKFILYLSILAVFTVSFAGGERFKEAPKFFNSPECLTIENDEDFVCSDKAIHVAMTLDTAYLRGSMAVILSVLQHSSCPQNIVFHFVTSKQSHRLQNYVVASFPYLKFRIYPYDVAAISGLISTSIRSALDSPLNYARNYLADILPTCLSRVVYLDSDLILVDDISKLFSTHIPTDVVLAAPEYCNANFTTYFTPTFWSNPSLSITLSLNRRATPCYFNTGVMVIELKKWREGDYTRKIIEWMELQKRIRIYELGSLPPFLLVFAGNIAPVDHRWNQHGLGGDNFRGLCRDLHPGPVSLLHWSGKGKPWVRLDDGRPCPLDALWVPYDLLESRFDLIES.

Residues 1-4 are Cytoplasmic-facing; that stretch reads MHSK. A helical; Signal-anchor for type II membrane protein membrane pass occupies residues 5-22; the sequence is FILYLSILAVFTVSFAGG. Over 23 to 341 the chain is Lumenal; the sequence is ERFKEAPKFF…LESRFDLIES (319 aa). Asn190 carries N-linked (GlcNAc...) asparagine glycosylation.

It belongs to the glycosyltransferase 8 family.

The protein localises to the golgi apparatus membrane. Its pathway is glycan metabolism; pectin biosynthesis. In terms of biological role, may be involved in pectin and/or xylans biosynthesis in cell walls. The protein is Probable galacturonosyltransferase-like 2 (GATL2) of Arabidopsis thaliana (Mouse-ear cress).